The sequence spans 496 residues: Mothers against decapentaplegic homolog 6 (496 aa).

Residues methionine 1–arginine 15 show a composition bias toward basic residues. Disordered regions lie at residues methionine 1–leucine 116 and glycine 136–glycine 156. A dimethylated arginine; alternate mark is found at arginine 75 and arginine 82. Omega-N-methylarginine; alternate is present on residues arginine 75 and arginine 82. Positions alanine 148–proline 275 constitute an MH1 domain. Residue lysine 173 forms a Glycyl lysine isopeptide (Lys-Gly) (interchain with G-Cter in ubiquitin) linkage. Residues cysteine 205, cysteine 247, cysteine 260, and histidine 265 each contribute to the Zn(2+) site. The MH2 domain occupies tryptophan 331 to arginine 496. Phosphoserine; by PRKX; in vitro is present on serine 435.

This sequence belongs to the dwarfin/SMAD family. As to quaternary structure, interacts with NEDD4L. Interacts with WWP1. Interacts with STAMBP and PRKX. Interacts with RNF111 and AXIN1. Interacts with TGF-beta type I receptor superfamily members, including ACVR1B, BMPR1B and TGFBR1. In response to BMP2, but not to TGFB treatment, interacts with SMAD1, but not with SMAD2, nor with SMAD4; this interaction may inhibit SMAD1 binding to SMAD4. Interacts with HOXC8 and HOXC9. Interacts with PELI1; this interaction interferes with PELI1 complex formation with TRAF6, IRAK1, IRAK4 and MYD88 in response to IL1B and hence negatively regulates IL1R-TLR signaling. Interacts with TSC22D1/TSC-22. Post-translationally, phosphorylated by BMP type 1 receptor kinase and by PRKX. Monoubiquitinated at Lys-173 by the E2/E3 hybrid ubiquitin-protein ligase UBE2O, leading to reduced binding affinity for the activated BMP type I receptor ACVR1/ALK2, thereby enhancing BMP7 and regulating adipocyte differentiation. Ubiquitinated by WWP1. Ubiquitinated by ARK2C, promoting proteasomal degradation, leading to enhance the BMP-Smad signaling. In terms of processing, arginine methylation by PRMT1, which is recruited by BMPR2, initiates BMP-Induced signaling and induces dissociation from the BMPR1B receptor at the cell surface leading to derepress downstream Smad1/Smad5 signaling. As to expression, expressed in the brain, heart, ovary, peripheral blood leukocytes, small intestine, spleen, thymus, bone marrow, fetal liver and lymph nodes.

It is found in the nucleus. In terms of biological role, transforming growth factor-beta superfamily receptors signaling occurs through the Smad family of intracellular mediators. SMAD6 is an inhibitory Smad (i-Smad) that negatively regulates signaling downstream of type I transforming growth factor-beta. Acts as a mediator of TGF-beta and BMP anti-inflammatory activities. Suppresses IL1R-TLR signaling through its direct interaction with PEL1, preventing NF-kappa-B activation, nuclear transport and NF-kappa-B-mediated expression of pro-inflammatory genes. Blocks the BMP-SMAD1 signaling pathway by competing with SMAD4 for receptor-activated SMAD1-binding. Binds to regulatory elements in target promoter regions. The chain is Mothers against decapentaplegic homolog 6 (SMAD6) from Homo sapiens (Human).